A 966-amino-acid polypeptide reads, in one-letter code: Alanine--tRNA ligase (966 aa).

Zn(2+)-binding residues include H646, H650, C750, and H754. The tract at residues 927–949 (DRLGGGGGGRPSLASAGGRDPEA) is disordered.

It belongs to the class-II aminoacyl-tRNA synthetase family. The cofactor is Zn(2+).

The protein localises to the cytoplasm. It carries out the reaction tRNA(Ala) + L-alanine + ATP = L-alanyl-tRNA(Ala) + AMP + diphosphate. In terms of biological role, catalyzes the attachment of alanine to tRNA(Ala) in a two-step reaction: alanine is first activated by ATP to form Ala-AMP and then transferred to the acceptor end of tRNA(Ala). Also edits incorrectly charged Ser-tRNA(Ala) and Gly-tRNA(Ala) via its editing domain. The protein is Alanine--tRNA ligase of Salinibacter ruber (strain DSM 13855 / M31).